We begin with the raw amino-acid sequence, 858 residues long: Coiled-coil and C2 domain-containing protein 1B (858 aa).

Disordered stretches follow at residues 112–164 (VLGV…GASQ), 180–199 (AAAS…CERG), 204–284 (ESQL…ALLS), 329–352 (VDLS…APTA), and 470–533 (EKLA…SPSV). Residues 114–143 (GVDEETEPLDGDEVADPGGSEEENGLEDTE) show a composition bias toward acidic residues. The segment covering 153–164 (ASAPAAQAGASQ) has biased composition (low complexity). Positions 166–212 (LHALLEERIHNYREAAASAKEAGEAAKARRCERGLKTLESQLASVRR) form a coiled coil. The segment covering 186–199 (EAGEAAKARRCERG) has biased composition (basic and acidic residues). Ser209 bears the Phosphoserine mark. Residues 520–532 (PRASSSKESPSPS) are compositionally biased toward low complexity. A Phosphoserine modification is found at Ser593. Thr596 carries the phosphothreonine modification. Residues 611 to 635 (RLSQKAEEVYAQLQKMLLEQQEKCL) are a coiled coil. The region spanning 676–815 (DPPTHHFELK…ENECEIREIV (140 aa)) is the C2 domain.

This sequence belongs to the CC2D1 family. As to quaternary structure, interacts with CHMP4B. Widely distributed in brain and peripheral tissues.

It localises to the nucleus. In terms of biological role, transcription factor that binds specifically to the DRE (dual repressor element) and represses HTR1A gene transcription in neuronal cells. The protein is Coiled-coil and C2 domain-containing protein 1B (CC2D1B) of Homo sapiens (Human).